The sequence spans 219 residues: Large ribosomal subunit protein uL3 (219 aa).

N5-methylglutamine is present on Gln-151.

The protein belongs to the universal ribosomal protein uL3 family. Part of the 50S ribosomal subunit. Forms a cluster with proteins L14 and L19. Methylated by PrmB.

Its function is as follows. One of the primary rRNA binding proteins, it binds directly near the 3'-end of the 23S rRNA, where it nucleates assembly of the 50S subunit. The polypeptide is Large ribosomal subunit protein uL3 (Blochmanniella floridana).